The sequence spans 1035 residues: Integrin alpha-9 (1035 aa).

The N-terminal stretch at 1 to 29 (MGGPAAPRGAGRLRALLLALVVAGIPAGA) is a signal peptide. Residues 30 to 981 (YNLDPQRPVH…LEPRGYVVGW (952 aa)) lie on the Extracellular side of the membrane. FG-GAP repeat units follow at residues 35-96 (QRPV…PDRR), 111-174 (SCGK…AKGR), 182-232 (EYKK…NTYL), 233-289 (KLND…SGTL), 290-349 (IKIF…GALE), 351-408 (QLAL…GIVP), and 411-474 (SMKL…LPGS). Cystine bridges form between Cys87–Cys97, Cys142–Cys162, and Cys179–Cys194. Asn225 carries an N-linked (GlcNAc...) asparagine glycan. Residues Asp312, Asn314, Asp316, Asp320, Asp373, Asp375, Asp377, Asp381, Asp435, Asp437, Asn439, and Asp443 each contribute to the Ca(2+) site. Asn476 carries N-linked (GlcNAc...) asparagine glycosylation. Cys482 and Cys491 are disulfide-bonded. Asn493 carries an N-linked (GlcNAc...) asparagine glycan. Cys497 and Cys555 form a disulfide bridge. Residue Asn612 is glycosylated (N-linked (GlcNAc...) asparagine). Cys620 and Cys625 are joined by a disulfide. N-linked (GlcNAc...) asparagine glycans are attached at residues Asn654, Asn658, Asn672, and Asn676. A disulfide bond links Cys696 and Cys706. N-linked (GlcNAc...) asparagine glycans are attached at residues Asn807 and Asn854. Cystine bridges form between Cys855–Cys891 and Cys898–Cys903. The N-linked (GlcNAc...) asparagine glycan is linked to Asn904. A helical transmembrane segment spans residues 982–1002 (IIAISLLVGILIFLLLAVLLW). At 1003-1035 (KMGFFRRRYKEIIEAEKNRKENEDSWDWVQKNQ) the chain is on the cytoplasmic side. The GFFKR motif signature appears at 1005–1009 (GFFRR).

Belongs to the integrin alpha chain family. Heterodimer of an alpha and a beta subunit. Alpha-9 (ITGA9) associates with beta-1 (ITGB1). Integrin ITGA9:ITGB1 interacts with FBLN5 (via N-terminus). Integrin ITGA9:ITGB1 interacts with SPP1/OPN (via N-terminus). Integrin ITGA9:ITGB1 interacts with TNC/TNFN3 (via the 3rd Fibronectin type-III domain). Integrin ITGA9:ITGB1 interacts with SVEP1/polydom (via Sushi domain 21); thereby inhibits Ca(2+) intracellular signaling and as a result represses vasocontraction. As to expression, expressed in vascular smooth muscle cells (at protein level). Expressed in the airway epithelium (at protein level).

The protein resides in the membrane. In terms of biological role, integrin alpha-9/beta-1 (ITGA9:ITGB1) is a receptor for VCAM1, cytotactin and osteopontin. It recognizes the sequence A-E-I-D-G-I-E-L in cytotactin. ITGA9:ITGB1 may play a crucial role in SVEP1/polydom-mediated myoblast cell adhesion. Integrin ITGA9:ITGB1 represses PRKCA-mediated L-type voltage-gated channel Ca(2+) influx and ROCK-mediated calcium sensitivity in vascular smooth muscle cells via its interaction with SVEP1, thereby inhibiting vasocontraction. The protein is Integrin alpha-9 (ITGA9) of Homo sapiens (Human).